Reading from the N-terminus, the 198-residue chain is Holliday junction branch migration complex subunit RuvA (198 aa).

The tract at residues 1–64 (MYEYIKGKYI…EDFIGLYGFD (64 aa)) is domain I. Residues 65 to 143 (SKEELEMFKL…PDELVDSSLE (79 aa)) form a domain II region. Residues 144–149 (IDTKDN) are flexible linker. Positions 150 to 198 (ENVMALSEALSALIALGYSEKEAESVLKKIDKNDSVENIIKNALKALMG) are domain III.

Belongs to the RuvA family. Homotetramer. Forms an RuvA(8)-RuvB(12)-Holliday junction (HJ) complex. HJ DNA is sandwiched between 2 RuvA tetramers; dsDNA enters through RuvA and exits via RuvB. An RuvB hexamer assembles on each DNA strand where it exits the tetramer. Each RuvB hexamer is contacted by two RuvA subunits (via domain III) on 2 adjacent RuvB subunits; this complex drives branch migration. In the full resolvosome a probable DNA-RuvA(4)-RuvB(12)-RuvC(2) complex forms which resolves the HJ.

The protein resides in the cytoplasm. Its function is as follows. The RuvA-RuvB-RuvC complex processes Holliday junction (HJ) DNA during genetic recombination and DNA repair, while the RuvA-RuvB complex plays an important role in the rescue of blocked DNA replication forks via replication fork reversal (RFR). RuvA specifically binds to HJ cruciform DNA, conferring on it an open structure. The RuvB hexamer acts as an ATP-dependent pump, pulling dsDNA into and through the RuvAB complex. HJ branch migration allows RuvC to scan DNA until it finds its consensus sequence, where it cleaves and resolves the cruciform DNA. This chain is Holliday junction branch migration complex subunit RuvA, found in Clostridium beijerinckii (strain ATCC 51743 / NCIMB 8052) (Clostridium acetobutylicum).